Reading from the N-terminus, the 623-residue chain is Zinc finger protein 131 (623 aa).

The BTB domain maps to 34 to 98; it reads TDITLIVDGH…TYTAKLMIQG (65 aa). The Nuclear localization signal 1 motif lies at 137–148; that stretch reads TGKNEAKKRKIA. 3 consecutive C2H2-type zinc fingers follow at residues 261 to 283, 288 to 311, and 328 to 350; these read FHCEKCNRSFKLFYHFKEHMKSH, FKCEICNKRYLRESAWKQHLNCYH, and HVCQYCEKQFDHFGHFKEHLRKH. Glycyl lysine isopeptide (Lys-Gly) (interchain with G-Cter in SUMO2) cross-links involve residues Lys-289 and Lys-295. The Nuclear localization signal 2 signature appears at 317-328; sequence VSKKQRTGKKIH. The C2H2-type 4; degenerate zinc finger occupies 356–381; that stretch reads FECPNCHERFARNSTLKCHLTACQTG. C2H2-type zinc fingers lie at residues 392–414 and 420–443; these read YECQVCNSVFNSWDQFKDHLVIH and NHCTLCDLWFMQGNELRRHLSDAH. Positions 573–617 are enriched in basic and acidic residues; it reads NQEERESSQADAAEAAREDHEDAEDLETKPTVDSEAEKAENEDRT. The tract at residues 573-623 is disordered; the sequence is NQEERESSQADAAEAAREDHEDAEDLETKPTVDSEAEKAENEDRTALPVLE. Residue Lys-601 forms a Glycyl lysine isopeptide (Lys-Gly) (interchain with G-Cter in SUMO) linkage.

Belongs to the krueppel C2H2-type zinc-finger protein family. Monosumoylated at Lys-601 by CBX4 and UHRF2. Sumoylation may potentiate ZNF131 inhibition of estrogen signaling. Sumoylation does not interfere with ubiquitination. In terms of processing, ubiquitinated. As to expression, predominant expression is found in different brain areas such as the occipital and temporal lobe, the nucleus caudatus, hippocampus, and the cerebellum as well as in testis and thymus.

The protein localises to the nucleus. Its function is as follows. Plays a role during development and organogenesis as well as in the function of the adult central nervous system. May be involved in transcriptional regulation as a repressor of ESR1/ER-alpha signaling. The polypeptide is Zinc finger protein 131 (ZNF131) (Homo sapiens (Human)).